The sequence spans 254 residues: MVFDAVGNPQTILLLGGTSEIGLAICERYLRNASARIVLAVMPGDPGRDAAVEQMRKAGASAVDVVDFDALDTESHPAVIDQAFAGGDVDVAIVAFGLLGDAEELWQNQRKAVQIAGVNYTAAVSVGVLLGEKMRAQGSGQIIAMSSAAGERVRRSNFVYGSTKAGLDGFYLGLGEALREFGVRVLVIRPGQVRTRMSAHVKEAPLTVDKEYVAELAVTASAKGKELVWAPGAFRYVMMVLRHIPRPIFRKLPI.

Aspartate 67 is a binding site for NAD(+). The active-site Proton acceptor is the tyrosine 160. NAD(+) is bound at residue lysine 164.

This sequence belongs to the short-chain dehydrogenases/reductases (SDR) family. Interacts with DprE1 to form an epimerase complex.

Its subcellular location is the periplasm. The enzyme catalyses trans,octa-cis-decaprenylphospho-beta-D-arabinofuranose + NAD(+) = trans,octa-cis-decaprenylphospho-beta-D-erythro-pentofuranosid-2-ulose + NADH + H(+). It participates in cell wall biogenesis; cell wall polysaccharide biosynthesis. Component of the DprE1-DprE2 complex that catalyzes the 2-step epimerization of decaprenyl-phospho-ribose (DPR) to decaprenyl-phospho-arabinose (DPA), a key precursor that serves as the arabinose donor required for the synthesis of cell-wall arabinans. DprE1 catalyzes the first step of epimerization, namely FAD-dependent oxidation of the C2' hydroxyl of DPR to yield the keto intermediate decaprenyl-phospho-2'-keto-D-arabinose (DPX). The intermediate DPX is then transferred to DprE2 subunit of the epimerase complex, most probably through a 'substrate channel' at the interface of DprE1-DprE2 complex. DprE2 then catalyzes the second step of epimerization, the NAD(+)-dependent reduction of DPX that leads to the formation of DPA. The protein is Decaprenylphosphoryl-2-keto-beta-D-erythro-pentose reductase of Mycolicibacterium smegmatis (strain ATCC 700084 / mc(2)155) (Mycobacterium smegmatis).